The sequence spans 449 residues: Glucose-6-phosphate isomerase (449 aa).

Catalysis depends on Glu-291, which acts as the Proton donor. Residues His-312 and Lys-426 contribute to the active site.

This sequence belongs to the GPI family.

It localises to the cytoplasm. The enzyme catalyses alpha-D-glucose 6-phosphate = beta-D-fructose 6-phosphate. The protein operates within carbohydrate biosynthesis; gluconeogenesis. It functions in the pathway carbohydrate degradation; glycolysis; D-glyceraldehyde 3-phosphate and glycerone phosphate from D-glucose: step 2/4. Functionally, catalyzes the reversible isomerization of glucose-6-phosphate to fructose-6-phosphate. The protein is Glucose-6-phosphate isomerase of Streptococcus pyogenes serotype M3 (strain ATCC BAA-595 / MGAS315).